The following is a 325-amino-acid chain: Heat-inducible transcription repressor HrcA (325 aa).

Belongs to the HrcA family.

Functionally, negative regulator of class I heat shock genes (grpE-dnaK-dnaJ and groELS operons). Prevents heat-shock induction of these operons. The protein is Heat-inducible transcription repressor HrcA of Staphylococcus epidermidis (strain ATCC 35984 / DSM 28319 / BCRC 17069 / CCUG 31568 / BM 3577 / RP62A).